We begin with the raw amino-acid sequence, 126 residues long: Protein Wnt-1 (126 aa).

The O-palmitoleoyl serine; by PORCN moiety is linked to residue serine 1. Cysteines 92 and 107 form a disulfide. N-linked (GlcNAc...) asparagine glycans are attached at residues asparagine 93 and asparagine 123.

Belongs to the Wnt family. Palmitoleoylation is required for efficient binding to frizzled receptors. Palmitoleoylation is necessary for proper trafficking to cell surface. Depalmitoleoylated by NOTUM, leading to inhibit Wnt signaling pathway.

It localises to the secreted. Its subcellular location is the extracellular space. It is found in the extracellular matrix. In terms of biological role, ligand for members of the frizzled family of seven transmembrane receptors. Acts in the canonical Wnt signaling pathway by promoting beta-catenin-dependent transcriptional activation. Plays an essential role in the development of the embryonic brain and central nervous system (CNS). Has a role in osteoblast function, bone development and bone homeostasis. In Pituophis melanoleucus (Pine snake), this protein is Protein Wnt-1 (WNT-1).